The chain runs to 182 residues: UPF0397 protein SPP_0507 (182 aa).

5 consecutive transmembrane segments (helical) span residues 10 to 30 (VVAV…NIPT), 46 to 66 (LLSI…GHAI), 73 to 93 (YGLW…VGLF), 109 to 129 (ILIF…VLAP), and 148 to 168 (IVAG…LLLA).

The protein belongs to the UPF0397 family.

The protein resides in the cell membrane. The polypeptide is UPF0397 protein SPP_0507 (Streptococcus pneumoniae (strain P1031)).